Here is a 344-residue protein sequence, read N- to C-terminus: Phosphate acyltransferase (344 aa).

Belongs to the PlsX family. As to quaternary structure, homodimer. Probably interacts with PlsY.

It is found in the cytoplasm. It catalyses the reaction a fatty acyl-[ACP] + phosphate = an acyl phosphate + holo-[ACP]. Its pathway is lipid metabolism; phospholipid metabolism. In terms of biological role, catalyzes the reversible formation of acyl-phosphate (acyl-PO(4)) from acyl-[acyl-carrier-protein] (acyl-ACP). This enzyme utilizes acyl-ACP as fatty acyl donor, but not acyl-CoA. The sequence is that of Phosphate acyltransferase from Yersinia pestis bv. Antiqua (strain Antiqua).